Here is a 328-residue protein sequence, read N- to C-terminus: 4-hydroxythreonine-4-phosphate dehydrogenase (328 aa).

Substrate contacts are provided by His-135 and Thr-136. A divalent metal cation is bound by residues His-165, His-210, and His-265. Substrate-binding residues include Lys-273, Asn-282, and Arg-291.

This sequence belongs to the PdxA family. Homodimer. Zn(2+) is required as a cofactor. It depends on Mg(2+) as a cofactor. The cofactor is Co(2+).

The protein localises to the cytoplasm. It catalyses the reaction 4-(phosphooxy)-L-threonine + NAD(+) = 3-amino-2-oxopropyl phosphate + CO2 + NADH. The protein operates within cofactor biosynthesis; pyridoxine 5'-phosphate biosynthesis; pyridoxine 5'-phosphate from D-erythrose 4-phosphate: step 4/5. Its function is as follows. Catalyzes the NAD(P)-dependent oxidation of 4-(phosphooxy)-L-threonine (HTP) into 2-amino-3-oxo-4-(phosphooxy)butyric acid which spontaneously decarboxylates to form 3-amino-2-oxopropyl phosphate (AHAP). This Enterobacter sp. (strain 638) protein is 4-hydroxythreonine-4-phosphate dehydrogenase.